The sequence spans 280 residues: UPF0494 membrane protein SPAC212.01c (280 aa).

4 helical membrane-spanning segments follow: residues 107-127 (WPLL…KFEV), 144-164 (IWVP…SLIF), 178-198 (VIIA…GMII), and 199-219 (AALG…LYFG).

It belongs to the UPF0494 family.

The protein resides in the membrane. The protein is UPF0494 membrane protein SPAC212.01c of Schizosaccharomyces pombe (strain 972 / ATCC 24843) (Fission yeast).